A 363-amino-acid polypeptide reads, in one-letter code: Hydroxycarboxylic acid receptor 2 (363 aa).

Over 1–33 (MNRHHLQDHFLEIDKKNCCVFRDDFIVKVLPPV) the chain is Extracellular. Residues 34–54 (LGLEFIFGLLGNGLALWIFCF) traverse the membrane as a helical segment. The Cytoplasmic portion of the chain corresponds to 55–63 (HLKSWKSSR). Residues 64–84 (IFLFNLAVADFLLIICLPFLM) form a helical membrane-spanning segment. At 85-102 (DNYVRRWDWKFGDIPCRL) the chain is on the extracellular side. Cysteine 100 and cysteine 177 form a disulfide bridge. Residues 103–123 (MLFMLAMNRQGSIIFLTVVAV) form a helical membrane-spanning segment. Topologically, residues 124 to 142 (DRYFRVVHPHHALNKISNR) are cytoplasmic. A helical transmembrane segment spans residues 143-163 (TAAIISCLLWGITIGLTVHLL). The Extracellular segment spans residues 164–192 (KKKMPIQNGGANLCSSFSICHTFQWHEAM). Residues 193 to 213 (FLLEFFLPLGIILFCSARIIW) form a helical membrane-spanning segment. At 214–229 (SLRQRQMDRHAKIKRA) the chain is on the cytoplasmic side. Residues 230–250 (ITFIMVVAIVFVICFLPSVVV) form a helical membrane-spanning segment. The Extracellular segment spans residues 251–273 (RIRIFWLLHTSGTQNCEVYRSVD). A helical transmembrane segment spans residues 274 to 294 (LAFFITLSFTYMNSMLDPVVY). At 295–363 (YFSSPSFPNF…SPSYLGPTSP (69 aa)) the chain is on the cytoplasmic side. Positions 319-363 (GEPDNNRSTSVELTGDPNKTRGAPEALMANSGEPWSPSYLGPTSP) are disordered. Serine 328 bears the Phosphoserine mark.

Belongs to the G-protein coupled receptor 1 family. Expression largely restricted to adipose tissue and spleen. Expressed on mature neutrophils but not on immature neutrophils or eosinophils.

It is found in the cell membrane. In terms of biological role, acts as a high affinity receptor for both nicotinic acid (also known as niacin) and (D)-beta-hydroxybutyrate and mediates increased adiponectin secretion and decreased lipolysis through G(i)-protein-mediated inhibition of adenylyl cyclase. This pharmacological effect requires nicotinic acid doses that are much higher than those provided by a normal diet. Mediates nicotinic acid-induced apoptosis in mature neutrophils. Receptor activation by nicotinic acid results in reduced cAMP levels which may affect activity of cAMP-dependent protein kinase A and phosphorylation of target proteins, leading to neutrophil apoptosis. The rank order of potency for the displacement of nicotinic acid binding is 5-methyl pyrazole-3-carboxylic acid = pyridine-3-acetic acid &gt; acifran &gt; 5-methyl nicotinic acid = acipimox &gt;&gt; nicotinuric acid = nicotinamide. This chain is Hydroxycarboxylic acid receptor 2 (HCAR2), found in Homo sapiens (Human).